Consider the following 100-residue polypeptide: Apolipoprotein C-II (100 aa).

The signal sequence occupies residues 1-22 (MGTRFLLALFLVLLVLGFEVQG). Residues 66 to 74 (TVDEKLRDM) form a lipid binding region. A lipoprotein lipase cofactor region spans residues 78-100 (STAAVSTYAGIFTDQLLTLLKGD).

It belongs to the apolipoprotein C2 family. Proapolipoprotein C-II is synthesized as a sialic acid containing glycoprotein which is subsequently desialylated prior to its proteolytic processing. Post-translationally, proapolipoprotein C-II, the major form found in plasma undergoes proteolytic cleavage of its N-terminal hexapeptide to generate apolipoprotein C-II, which occurs as the minor form in plasma.

It localises to the secreted. Functionally, component of chylomicrons, very low-density lipoproteins (VLDL), low-density lipoproteins (LDL), and high-density lipoproteins (HDL) in plasma. Plays an important role in lipoprotein metabolism as an activator of lipoprotein lipase. Both proapolipoprotein C-II and apolipoprotein C-II can activate lipoprotein lipase. In Otolemur garnettii (Small-eared galago), this protein is Apolipoprotein C-II (APOC2).